A 413-amino-acid polypeptide reads, in one-letter code: Probable cysteine desulfurase (413 aa).

An N6-(pyridoxal phosphate)lysine modification is found at Lys-229. Cys-368 (cysteine persulfide intermediate) is an active-site residue.

Belongs to the class-V pyridoxal-phosphate-dependent aminotransferase family. Csd subfamily. It depends on pyridoxal 5'-phosphate as a cofactor.

It catalyses the reaction (sulfur carrier)-H + L-cysteine = (sulfur carrier)-SH + L-alanine. In terms of biological role, catalyzes the removal of elemental sulfur and selenium atoms from L-cysteine, L-cystine, L-selenocysteine, and L-selenocystine to produce L-alanine. The chain is Probable cysteine desulfurase (csd) from Staphylococcus aureus (strain COL).